A 109-amino-acid chain; its full sequence is Nucleoid-associated protein VC_1055 (109 aa).

The interval 1 to 22 is disordered; sequence MFGKGGMGNLMKQAQQMQERMQ.

Belongs to the YbaB/EbfC family. In terms of assembly, homodimer.

The protein resides in the cytoplasm. The protein localises to the nucleoid. Functionally, binds to DNA and alters its conformation. May be involved in regulation of gene expression, nucleoid organization and DNA protection. The chain is Nucleoid-associated protein VC_1055 from Vibrio cholerae serotype O1 (strain ATCC 39315 / El Tor Inaba N16961).